A 198-amino-acid chain; its full sequence is uncharacterized protein (198 aa).

It is found in the plastid. It localises to the chloroplast. This is an uncharacterized protein from Antithamnion sp. (Red alga).